Here is a 538-residue protein sequence, read N- to C-terminus: MAAEQDPEARAAARPLLTDLYQATMALGYWRAGRARDAAEFELFFRRCPFGGAFALAAGLRDCVRFLRAFRLRDADVQFLASVLPPDTDPAFFEHLRALDCSEVTVRALPEGSLAFPGVPLLQVSGPLLVVQLLETPLLCLVSYASLVATNAARLRLIAGPEKRLLEMGLRRAQGPDGGLTASTYSYLGGFDSSSNVLAGQLRGVPVAGTLAHSFVTSFSGSEVPPDPMLAPAAGEGPGVDLAAKAQVWLEQVCAHLGLGVQEPHPGERAAFVAYALAFPRAFQGLLDTYSVWRSGLPNFLAVALALGELGYRAVGVRLDSGDLLQQAQEIRKVFRAAAAQFQVPWLESVLIVVSNNIDEEALARLAQEGSEVNVIGIGTSVVTCPQQPSLGGVYKLVAVGGQPRMKLTEDPEKQTLPGSKAAFRLLGSDGSPLMDMLQLAEEPVPQAGQELRVWPPGAQEPCTVRPAQVEPLLRLCLQQGQLCEPLPSLAESRALAQLSLSRLSPEHRRLRSPAQYQVVLSERLQALVNSLCAGQSP.

Nicotinate contacts are provided by Y21 and T210. Phosphohistidine is present on H213. Position 318 (R318) interacts with nicotinate. T380 serves as a coordination point for 5-phospho-alpha-D-ribose 1-diphosphate. Phosphoserine is present on S537.

Belongs to the NAPRTase family. In terms of assembly, homodimer. Mg(2+) serves as cofactor. Mn(2+) is required as a cofactor. Transiently phosphorylated on a His residue during the reaction cycle. Phosphorylation strongly increases the affinity for substrates and increases the rate of nicotinate D-ribonucleotide production. Dephosphorylation regenerates the low-affinity form of the enzyme, leading to product release.

It is found in the cytoplasm. It localises to the cytosol. It carries out the reaction nicotinate + 5-phospho-alpha-D-ribose 1-diphosphate + ATP + H2O = nicotinate beta-D-ribonucleotide + ADP + phosphate + diphosphate. Its pathway is cofactor biosynthesis; NAD(+) biosynthesis; nicotinate D-ribonucleotide from nicotinate: step 1/1. Its function is as follows. Catalyzes the first step in the biosynthesis of NAD from nicotinic acid, the ATP-dependent synthesis of beta-nicotinate D-ribonucleotide from nicotinate and 5-phospho-D-ribose 1-phosphate. Helps prevent cellular oxidative stress via its role in NAD biosynthesis. The sequence is that of Nicotinate phosphoribosyltransferase (NAPRT) from Homo sapiens (Human).